Here is a 64-residue protein sequence, read N- to C-terminus: Phylloxin-S1 (64 aa).

The N-terminal stretch at 1–22 (MVFLKKSLLLVLFVGLVSLSIC) is a signal peptide. The propeptide occupies 23-44 (EENKREEHEEVEENAEKAEEKR). Glutamine 63 is subject to Glutamine amide.

In terms of tissue distribution, expressed by the skin glands.

It localises to the secreted. Functionally, antimicrobial peptide against both Gram-positive and Gram-negative bacteria. The protein is Phylloxin-S1 of Phyllomedusa sauvagei (Sauvage's leaf frog).